The chain runs to 1318 residues: Putative tetratricopeptide repeat protein 41 (1318 aa).

TPR repeat units follow at residues 399-432, 653-684, 817-850, 858-891, 991-1027, and 1045-1082; these read TQLETDILNEDSDGLVFSFLVEVFIASISLKPCI, WVQEKPNGLLYFWHQSLSAVEHKLLGVITPVE, CRLMFFIGSFLKFMGKTNEAEELFLSVEDMLVQS, LKVQNAIGELYLETGMTQEGFQYFQKAWSSMLRL, MEFLADLLFFPQRDSKKSQRKQVLKYYKQVIKIKENA, and SDTLCKLAGHLLASDSCHHVMIEAVGYLYRSVDLRVIH.

The protein resides in the cytoplasm. The sequence is that of Putative tetratricopeptide repeat protein 41 from Homo sapiens (Human).